The primary structure comprises 502 residues: Lysine--tRNA ligase (502 aa).

Positions 399 and 406 each coordinate Mg(2+).

This sequence belongs to the class-II aminoacyl-tRNA synthetase family. Homodimer. It depends on Mg(2+) as a cofactor.

It is found in the cytoplasm. It carries out the reaction tRNA(Lys) + L-lysine + ATP = L-lysyl-tRNA(Lys) + AMP + diphosphate. The protein is Lysine--tRNA ligase of Synechococcus sp. (strain RCC307).